The following is a 199-amino-acid chain: NAD(P)H dehydrogenase (quinone) (199 aa).

The Flavodoxin-like domain occupies 4-190 (VLVLYHSMYG…AIARFQGKHV (187 aa)). Residues 10 to 15 (SMYGHI) and 79 to 81 (TRF) each bind FMN. Residue tyrosine 12 coordinates NAD(+). Position 99 (tryptophan 99) interacts with substrate. Histidine 134 lines the FMN pocket.

Belongs to the WrbA family. Requires FMN as cofactor.

The catalysed reaction is a quinone + NADH + H(+) = a quinol + NAD(+). It carries out the reaction a quinone + NADPH + H(+) = a quinol + NADP(+). The sequence is that of NAD(P)H dehydrogenase (quinone) from Tolumonas auensis (strain DSM 9187 / NBRC 110442 / TA 4).